The chain runs to 145 residues: Aminoglycoside N(6')-acetyltransferase type 1 (145 aa).

Positions 1-145 (MDIRQMNKTH…ERVIFYRKRC (145 aa)) constitute an N-acetyltransferase domain. Substrate is bound by residues tryptophan 22, histidine 25, tyrosine 66, and glutamate 79. Residues 81-83 (IFV) and 89-94 (QRGVAK) each bind acetyl-CoA. Aspartate 115 is a substrate binding site. An acetyl-CoA-binding site is contributed by asparagine 120. Residue glutamate 136 coordinates substrate.

In terms of assembly, homodimer.

It carries out the reaction kanamycin B + acetyl-CoA = N(6')-acetylkanamycin B + CoA + H(+). Functionally, catalyzes the transfer of an acetyl group from acetyl-CoA to the 6'-amino group of aminoglycoside molecules conferring resistance to antibiotics containing the purpurosamine ring including amikacin, tobramycin, dibekacin and ribostamycin. Able to acetylate eukaryotic histone proteins. The protein is Aminoglycoside N(6')-acetyltransferase type 1 of Salmonella enteritidis.